Here is a 66-residue protein sequence, read N- to C-terminus: Photosystem II reaction center protein J (66 aa).

The disordered stretch occupies residues 1–25 (MSGKKSPYPDGRIPDRNPDGTPAVP). The chain crosses the membrane as a helical span at residues 37 to 57 (LWLVATAGGMAVLFVVGLFFY).

This sequence belongs to the PsbJ family. In terms of assembly, PSII is composed of 1 copy each of membrane proteins PsbA, PsbB, PsbC, PsbD, PsbE, PsbF, PsbH, PsbI, PsbJ, PsbK, PsbL, PsbM, PsbT, PsbX, PsbY, PsbZ, Psb30/Ycf12, peripheral proteins PsbO, CyanoQ (PsbQ), PsbU, PsbV and a large number of cofactors. It forms dimeric complexes.

Its subcellular location is the cellular thylakoid membrane. One of the components of the core complex of photosystem II (PSII). PSII is a light-driven water:plastoquinone oxidoreductase that uses light energy to abstract electrons from H(2)O, generating O(2) and a proton gradient subsequently used for ATP formation. It consists of a core antenna complex that captures photons, and an electron transfer chain that converts photonic excitation into a charge separation. This is Photosystem II reaction center protein J from Synechococcus sp. (strain CC9605).